The primary structure comprises 324 residues: Lipoyl synthase (324 aa).

[4Fe-4S] cluster contacts are provided by cysteine 71, cysteine 76, cysteine 82, cysteine 97, cysteine 101, cysteine 104, and serine 311. The region spanning 83–300 (FGHGTATFLI…GDKAREMGFT (218 aa)) is the Radical SAM core domain.

Belongs to the radical SAM superfamily. Lipoyl synthase family. It depends on [4Fe-4S] cluster as a cofactor.

It is found in the cytoplasm. It catalyses the reaction [[Fe-S] cluster scaffold protein carrying a second [4Fe-4S](2+) cluster] + N(6)-octanoyl-L-lysyl-[protein] + 2 oxidized [2Fe-2S]-[ferredoxin] + 2 S-adenosyl-L-methionine + 4 H(+) = [[Fe-S] cluster scaffold protein] + N(6)-[(R)-dihydrolipoyl]-L-lysyl-[protein] + 4 Fe(3+) + 2 hydrogen sulfide + 2 5'-deoxyadenosine + 2 L-methionine + 2 reduced [2Fe-2S]-[ferredoxin]. It functions in the pathway protein modification; protein lipoylation via endogenous pathway; protein N(6)-(lipoyl)lysine from octanoyl-[acyl-carrier-protein]: step 2/2. In terms of biological role, catalyzes the radical-mediated insertion of two sulfur atoms into the C-6 and C-8 positions of the octanoyl moiety bound to the lipoyl domains of lipoate-dependent enzymes, thereby converting the octanoylated domains into lipoylated derivatives. In Nitrosococcus oceani (strain ATCC 19707 / BCRC 17464 / JCM 30415 / NCIMB 11848 / C-107), this protein is Lipoyl synthase.